Reading from the N-terminus, the 192-residue chain is Visinin (192 aa).

Residue Gly2 is the site of N-myristoyl glycine attachment. 4 consecutive EF-hand domains span residues 24 to 59, 61 to 96, 97 to 132, and 146 to 181; these read TEEE…FFPN, EPQG…TSSG, KTHL…IFKM, and NSPQ…KNDA. Ca(2+)-binding residues include Asp74, Asn76, Asp78, Thr80, Glu85, Asp110, Asp112, Asn114, Glu116, Glu121, Asn164, Lys166, and Glu171.

The protein belongs to the recoverin family. As to expression, retinal cell specific protein.

Functionally, seems to be implicated in the pathway from retinal rod guanylate cyclase to rhodopsin. May be involved in the blocking of the phosphorylation of rhodopsin. This Gallus gallus (Chicken) protein is Visinin.